Reading from the N-terminus, the 388-residue chain is Na(+)/H(+) antiporter NhaA (388 aa).

At 1–11 the chain is on the cytoplasmic side; it reads MKHLHRFFSSD. The chain crosses the membrane as a helical span at residues 12–31; the sequence is ASGGIILIIAAVLAMIMANS. The Periplasmic portion of the chain corresponds to 32 to 58; sequence GATSGWYHDFLETPVQLRVGTLEINKN. A helical membrane pass occupies residues 59–80; the sequence is MLLWINDALMAVFFLLVGLEVK. The Cytoplasmic portion of the chain corresponds to 81–96; sequence RELMQGSLASLRQAAF. The chain crosses the membrane as a helical span at residues 97–116; sequence PVIAAIGGMIVPALLYLAFN. At 117 to 122 the chain is on the periplasmic side; sequence YADPIT. Residues 123-130 traverse the membrane as a helical segment; the sequence is REGWAIPA. Over 131–154 the chain is Cytoplasmic; that stretch reads ATDIAFALGVLALLGSRVPLALKI. Residues 155-176 form a helical membrane-spanning segment; the sequence is FLMALAIIDDLGAIIIIALFYT. The Periplasmic portion of the chain corresponds to 177–180; the sequence is NDLS. A helical membrane pass occupies residues 181 to 200; sequence MASLGVAAVAIAVLVVLNLC. Residues 201–204 lie on the Cytoplasmic side of the membrane; sequence GVRR. The helical transmembrane segment at 205-222 threads the bilayer; that stretch reads TGVYILVGVVLWTAVLKS. Residue Gly223 is a topological domain, periplasmic. Residues 224 to 236 form a helical membrane-spanning segment; it reads VHATLAGVIVGFF. At 237–253 the chain is on the cytoplasmic side; sequence IPLKEKHGRSPAKRLEH. The chain crosses the membrane as a helical span at residues 254 to 272; it reads VLHPWVAYLILPLFAFANA. The Periplasmic segment spans residues 273-286; it reads GVSLQGVTLEGLTS. Residues 287-310 form a helical membrane-spanning segment; that stretch reads ILPLGIIAGLLIGKPLGISLFCWL. The Cytoplasmic segment spans residues 311 to 339; it reads ALRLKLAHLPEGTTYQQIMAVGILCGIGF. Residues 340-350 form a helical membrane-spanning segment; sequence TMSIFIASLAF. Over 351-357 the chain is Periplasmic; it reads GSVDPEL. Residues 358 to 380 form a helical membrane-spanning segment; sequence INWAKLGILVGSISSAVIGYSWL. Topologically, residues 381 to 388 are cytoplasmic; the sequence is RVRLRPSV.

Belongs to the NhaA Na(+)/H(+) (TC 2.A.33) antiporter family.

The protein localises to the cell inner membrane. It carries out the reaction Na(+)(in) + 2 H(+)(out) = Na(+)(out) + 2 H(+)(in). In terms of biological role, na(+)/H(+) antiporter that extrudes sodium in exchange for external protons. The protein is Na(+)/H(+) antiporter NhaA of Escherichia coli O1:K1 / APEC.